The primary structure comprises 150 residues: MERISGMSFDFYLFGLPIHAESISLSITDNSTVVQTRGIPDGWVSGDVAAEGEIELDAKNFSKLSAAAAAAGSYRSLPETDFTFFAQRGGIRDKVETFGNKIILTDVLNIDPKGGAKSMKKLKYFVTSPDFVRINGVSYLSDEDTRDLLG.

The chain is Putative tail tube protein from Haemophilus phage HP1 (strain HP1c1) (Bacteriophage HP1).